The primary structure comprises 459 residues: Transcriptional coactivator YAP1 (459 aa).

A phosphoserine; by LATS1 and LATS2 mark is found at serine 21, serine 69, serine 87, and serine 119. 2 disordered regions span residues 51–88 (LPDSFFKPPEPKSHSRQASTDAGSGGVLTPHHVRAHSS) and 103–129 (SGMASAGASPQHLRQSSYEIPDDVPLP). WW domains follow at residues 126–159 (VPLPPGWEMAKTSSGQRYFLNHIDQTTTWQDPRK) and 186–219 (GPLPEGWEQAITPEGEIYYINHKNKTTSWLDPRL). Disordered regions lie at residues 231-254 (TQSAPVKQGGPLPPNPHGGVMGGN) and 307-364 (PTSM…SSYS). The tract at residues 247-459 (HGGVMGGNNQ…IDKESFLTWL (213 aa)) is transactivation domain. 2 stretches are compositionally biased toward polar residues: residues 307 to 347 (PTSM…SGTY) and 355 to 364 (DSGLSMSSYS).

It belongs to the YAP1 family. Phosphorylated by lats1 and lats2; leading to cytoplasmic translocation and inactivation. Ubiquitously expressed throughout development.

It is found in the cytoplasm. Its subcellular location is the nucleus. The protein localises to the cell junction. It localises to the tight junction. The protein resides in the cell membrane. Functionally, transcriptional regulator which can act both as a coactivator and a corepressor and is the critical downstream regulatory target in the Hippo signaling pathway that plays a pivotal role in organ size control and tumor suppression by restricting proliferation and promoting apoptosis. Plays a key role in tissue tension and 3D tissue shape by regulating cortical actomyosin network formation. This is Transcriptional coactivator YAP1 from Oryzias latipes (Japanese rice fish).